The sequence spans 119 residues: Ribonuclease P protein component (119 aa).

The protein belongs to the RnpA family. Consists of a catalytic RNA component (M1 or rnpB) and a protein subunit.

The enzyme catalyses Endonucleolytic cleavage of RNA, removing 5'-extranucleotides from tRNA precursor.. Its function is as follows. RNaseP catalyzes the removal of the 5'-leader sequence from pre-tRNA to produce the mature 5'-terminus. It can also cleave other RNA substrates such as 4.5S RNA. The protein component plays an auxiliary but essential role in vivo by binding to the 5'-leader sequence and broadening the substrate specificity of the ribozyme. The sequence is that of Ribonuclease P protein component from Listeria welshimeri serovar 6b (strain ATCC 35897 / DSM 20650 / CCUG 15529 / CIP 8149 / NCTC 11857 / SLCC 5334 / V8).